Consider the following 392-residue polypeptide: Major outer membrane protein P.IA (392 aa).

The signal sequence occupies residues 1–19 (MRKKLTALVLSALPLAAVA).

This sequence belongs to the Gram-negative porin family. As to quaternary structure, homotrimer.

It is found in the cell outer membrane. Functionally, serves as a slightly cation selective porin. Major antigen on the gonococcal cell surface and it may have pathogenic properties in addition to its porin activity. This is Major outer membrane protein P.IA (porA) from Neisseria meningitidis serogroup B (strain ATCC BAA-335 / MC58).